Reading from the N-terminus, the 500-residue chain is Tyrosine decarboxylase 2 (500 aa).

A run of 2 repeats spans residues 65–122 (EDIR…TELE) and 125–176 (VLDW…GKRS). The tract at residues 65-176 (EDIRQKIVPG…KFLNRFGKRS (112 aa)) is 2 X approximate tandem repeats. Ser89 is a substrate binding site. Pyridoxal 5'-phosphate-binding residues include Ala153 and Ser154. Residue His189 coordinates substrate. Pyridoxal 5'-phosphate is bound by residues Thr248 and Asn302. N6-(pyridoxal phosphate)lysine is present on Lys305.

It belongs to the group II decarboxylase family. Pyridoxal 5'-phosphate is required as a cofactor. As to expression, mostly expressed in bulbs, and, to a lower extent, in stems, roots, leaves and flowers.

It catalyses the reaction L-tyrosine + H(+) = tyramine + CO2. The protein operates within alkaloid biosynthesis. In terms of biological role, catalyzes the decarboxylation of L-tyrosine to tyramine, which is converted to norbelladine, a precursor to all Amaryllidaceae alkaloids such as galanthamine, lycorine and haemanthamine, and including haemanthamine- and crinamine-type alkaloids, promising anticancer agents. This Narcissus pseudonarcissus (Daffodil) protein is Tyrosine decarboxylase 2.